We begin with the raw amino-acid sequence, 93 residues long: Early E3A 10.5 kDa glycoprotein (93 aa).

The N-linked (GlcNAc...) asparagine; by host glycan is linked to N3. The helical transmembrane segment at 34–55 (MWWFSIALMFVCLIIMWLICCL) threads the bilayer.

It belongs to the adenoviridae E3A-1 family. Post-translationally, N-glycosylated and probably also O-glycosylated.

The protein localises to the host nucleus membrane. This chain is Early E3A 10.5 kDa glycoprotein, found in Homo sapiens (Human).